The primary structure comprises 108 residues: Envelope small membrane protein (108 aa).

Topologically, residues 1 to 10 (MNLLNKSLEE) are virion surface. Residues 11 to 31 (NGSFLTALYIIVGFLALYLLG) form a helical membrane-spanning segment. At 32–108 (RALQAFVQAA…QDAQRDKLYS (77 aa)) the chain is on the intravirion side. A disordered region spans residues 88–108 (NGWNNKNPANFQDAQRDKLYS). The span at 89–100 (GWNNKNPANFQD) shows a compositional bias: polar residues.

Belongs to the gammacoronaviruses E protein family. In terms of assembly, homooligomer. Interacts with the M membrane protein in the budding compartment of the host cell, which is located between endoplasmic reticulum and the Golgi complex. The cytoplasmic tails of both proteins are important for this function. Interacts with Nucleoprotein.

It localises to the host Golgi apparatus membrane. Functionally, plays a central role in virus morphogenesis and assembly. Acts as a viroporin and self-assembles in host membranes forming pentameric protein-lipid pores that allow ion transport. Also plays a role in the induction of apoptosis. This Gallus gallus (Chicken) protein is Envelope small membrane protein.